The sequence spans 363 residues: 3,4-dihydroxy-2-butanone 4-phosphate synthase (363 aa).

The DHBP synthase stretch occupies residues 1 to 202; sequence MSHISPIPEI…ITDLIEYRSR (202 aa). Residues 28-29, Asp-33, 141-145, and Glu-165 each bind D-ribulose 5-phosphate; these read RE and RAGHT. Residue Glu-29 coordinates Mg(2+). His-144 is a binding site for Mg(2+). Residues 205-363 form a GTP cyclohydrolase II-like region; sequence SLLEDMGNAP…EVVGFEEAEK (159 aa).

It in the N-terminal section; belongs to the DHBP synthase family. The protein in the C-terminal section; belongs to the GTP cyclohydrolase II family. Mg(2+) serves as cofactor. The cofactor is Mn(2+).

The enzyme catalyses D-ribulose 5-phosphate = (2S)-2-hydroxy-3-oxobutyl phosphate + formate + H(+). Its pathway is cofactor biosynthesis; riboflavin biosynthesis; 2-hydroxy-3-oxobutyl phosphate from D-ribulose 5-phosphate: step 1/1. Functionally, catalyzes the conversion of D-ribulose 5-phosphate to formate and 3,4-dihydroxy-2-butanone 4-phosphate. The chain is 3,4-dihydroxy-2-butanone 4-phosphate synthase (ribB) from Neisseria meningitidis serogroup A / serotype 4A (strain DSM 15465 / Z2491).